The primary structure comprises 201 residues: Eukaryotic translation initiation factor 4E-5 (201 aa).

Residues C122 and C126 are joined by a disulfide bond.

The protein belongs to the eukaryotic initiation factor 4E family. In terms of assembly, eIF4F is a multi-subunit complex, the composition of which varies with external and internal environmental conditions. It is composed of at least eIF4A, eIF4E and eIF4G. eIF4E is also known to interact with other partners. As to expression, enriched in the germline.

In terms of biological role, recognizes and binds the 7-methylguanosine-containing mRNA cap during an early step in the initiation of protein synthesis and facilitates ribosome binding by inducing the unwinding of the mRNAs secondary structures. All 5 eIF4E proteins bind monomethyl cap structures. Only ife-1, ife-2 and ife-5 bind trimethyl cap structures which result from trans-splicing. Translation of trimethyl cap structure mRNAs may be regulated by intracellular redox state; disulfide bonds change the width and depth of the cap-binding cavity determining selectivity to mRNA caps. This is Eukaryotic translation initiation factor 4E-5 (ife-5) from Caenorhabditis elegans.